The primary structure comprises 490 residues: MALLLLLFLGLLGLWGLLCACAQDPSPAARWPPGPRPLPLVGNLHLLRLSQQDRSLMELSERYGPVFTVHLGRQKTVVLTGFEAVKEALAGPGQELADRPPIAIFQLIQRGGGIFFSSGARWRAARQFTVRALHSLGVGREPVADKILQELKCLSGQLDGYRGRPFPLALLGWAPSNITFALLFGRRFDYRDPVFVSLLGLIDEVMVLLGSPGLQLFNVYPWLGALLQLHRPVLRKIEEVRAILRTLLEARRPHVCPGDPVCSYVDALIQQGQGDDPEGLFAEANAVACTLDMVMAGTETTSATLQWAALLMGRHPDVQGRVQEELDRVLGPGRTPRLEDQQALPYTSAVLHEVQRFITLLPHVPRCTAADTQLGGFLLPKGTPVIPLLTSVLLDETQWQTPGQFNPGHFLDANGHFVKREAFLPFSAGRRVCVGERLARTELFLLFAGLLQRYRLLPPPGVSPASLDTTPARAFTMRPRAQALCAVPRP.

A signal peptide spans 1 to 22; sequence MALLLLLFLGLLGLWGLLCACA. N-linked (GlcNAc...) asparagine glycosylation is present at N177. C433 lines the heme pocket.

This sequence belongs to the cytochrome P450 family. Heme is required as a cofactor. In terms of tissue distribution, very low levels are detected in fetal and adult tissues. Highly expressed in several tumor samples, in particular colon and adrenal tumors.

The protein localises to the endoplasmic reticulum lumen. It is found in the cell membrane. Its subcellular location is the microsome membrane. It catalyses the reaction all-trans-retinoate + reduced [NADPH--hemoprotein reductase] + O2 = all-trans-4-hydroxyretinoate + oxidized [NADPH--hemoprotein reductase] + H2O + H(+). The enzyme catalyses 1-(9Z-octadecenoyl)-sn-glycero-3-phosphocholine + reduced [NADPH--hemoprotein reductase] + O2 = 1-[8-hydroxy-(9Z)-octadecenoyl]-sn-glycero-3-phosphocholine + oxidized [NADPH--hemoprotein reductase] + H2O + H(+). The catalysed reaction is 1-(9Z-octadecenoyl)-sn-glycero-3-phosphocholine + reduced [NADPH--hemoprotein reductase] + O2 = 1-[11-hydroxy-(9Z)-octadecenoyl]-sn-glycero-3-phosphocholine + oxidized [NADPH--hemoprotein reductase] + H2O + H(+). It carries out the reaction 1-(9Z-octadecenoyl)-sn-glycero-3-phosphocholine + reduced [NADPH--hemoprotein reductase] + O2 = 1-[(9S,10R)-epoxy-octadecanoyl]-sn-glycero-3-phosphocholine + oxidized [NADPH--hemoprotein reductase] + H2O + H(+). It catalyses the reaction 1-(9Z-octadecenoyl)-sn-glycero-3-phosphocholine + reduced [NADPH--hemoprotein reductase] + O2 = 1-[(9R,10S)-epoxy-octadecanoyl]-sn-glycero-3-phosphocholine + oxidized [NADPH--hemoprotein reductase] + H2O + H(+). In terms of biological role, a cytochrome P450 monooxygenase that may play a role in retinoid and phospholipid metabolism. Catalyzes the hydroxylation of saturated carbon hydrogen bonds. Hydroxylates all trans-retinoic acid (atRA) to 4-hydroxyretinoate and may regulate atRA clearance. Other retinoids such as all-trans retinol and all-trans retinal are potential endogenous substrates. Catalyzes both epoxidation of double bonds and hydroxylation of carbon hydrogen bonds of the fatty acyl chain of 1-acylphospholipids/2-lysophospholipids. Can metabolize various lysophospholipids classes including lysophosphatidylcholines (LPCs), lysophosphatidylinositols (LPIs), lysophosphatidylserines (LPSs), lysophosphatidylglycerols (LPGs), lysophosphatidylethanolamines (LPEs) and lysophosphatidic acids (LPAs). Has low or no activity toward 2-acylphospholipids/1-lysophospholipids, diacylphospholipids and free fatty acids. May play a role in tumorigenesis by activating procarcinogens such as aflatoxin B1, polycyclic aromatic hydrocarbon dihydrodiols and aromatic amines. Mechanistically, uses molecular oxygen inserting one oxygen atom into a substrate, and reducing the second into a water molecule, with two electrons provided by NADPH via cytochrome P450 reductase (CPR; NADPH-ferrihemoprotein reductase). In Homo sapiens (Human), this protein is Cytochrome P450 2W1.